The primary structure comprises 605 residues: UPF0313 protein GSU2873 (605 aa).

The region spanning 291-561 is the Radical SAM core domain; sequence AYEQIRASVT…LQKALLLWHL (271 aa). Residues Cys-305, Cys-309, and Cys-312 each contribute to the [4Fe-4S] cluster site. The segment at 586–605 is disordered; sequence GGAAGGGGGRSGSGFRPGRT. Residues 587 to 597 show a composition bias toward gly residues; it reads GAAGGGGGRSG.

This sequence belongs to the UPF0313 family. [4Fe-4S] cluster serves as cofactor.

This chain is UPF0313 protein GSU2873, found in Geobacter sulfurreducens (strain ATCC 51573 / DSM 12127 / PCA).